The sequence spans 189 residues: uncharacterized protein (189 aa).

Positions 1-23 (MVPPKPALWALLLALLGTAPSRA) are cleaved as a signal peptide. N-linked (GlcNAc...) asparagine glycosylation is present at asparagine 72.

This is an uncharacterized protein from Homo sapiens (Human).